The primary structure comprises 214 residues: Adenylate kinase (214 aa).

10–15 (GAGKGT) contacts ATP. Positions 30–59 (STGDIFRANIKGNTPLGQKAKEYMDKGELV) are NMP. Residues threonine 31, arginine 36, 57 to 59 (ELV), 85 to 88 (GFPR), and glutamine 92 each bind AMP. Residues 126-163 (GRRVCTNCGATYNVVFNPTKVEGICDVCNSPVIQRADD) are LID. Arginine 127 provides a ligand contact to ATP. Zn(2+) contacts are provided by cysteine 130 and cysteine 133. 136–137 (TY) lines the ATP pocket. 2 residues coordinate Zn(2+): cysteine 150 and cysteine 153. AMP contacts are provided by arginine 160 and arginine 171. Glycine 199 provides a ligand contact to ATP.

The protein belongs to the adenylate kinase family. As to quaternary structure, monomer.

It localises to the cytoplasm. It catalyses the reaction AMP + ATP = 2 ADP. It participates in purine metabolism; AMP biosynthesis via salvage pathway; AMP from ADP: step 1/1. Its function is as follows. Catalyzes the reversible transfer of the terminal phosphate group between ATP and AMP. Plays an important role in cellular energy homeostasis and in adenine nucleotide metabolism. This Ruminiclostridium cellulolyticum (strain ATCC 35319 / DSM 5812 / JCM 6584 / H10) (Clostridium cellulolyticum) protein is Adenylate kinase.